We begin with the raw amino-acid sequence, 670 residues long: Sodium, potassium, lithium and rubidium/H(+) antiporter (670 aa).

11 consecutive transmembrane segments (helical) span residues 5–27, 46–66, 83–103, 105–125, 156–176, 182–202, 228–248, 276–296, 314–334, 355–375, and 389–409; these read LVVL…IPFI, GLHF…PLLF, PILL…GYTI, WMIP…LSPT, ASGL…AFSL, SFVF…FLII, FVIY…VVAG, IILF…IPDV, YILV…LFFW, LLIS…FSIP, and LILF…TVVL.

This sequence belongs to the monovalent cation:proton antiporter 1 (CPA1) transporter (TC 2.A.36) family. Nhak (TC 2.A.36.3.2) subfamily.

The protein resides in the cell membrane. Functionally, transporter involved in the efflux of sodium, potassium, lithium and rubidium. In Bacillus subtilis (strain 168), this protein is Sodium, potassium, lithium and rubidium/H(+) antiporter (nhaK).